A 148-amino-acid polypeptide reads, in one-letter code: Large ribosomal subunit protein uL11 (148 aa).

Residues glutamate 89 to threonine 108 are disordered.

It belongs to the universal ribosomal protein uL11 family. Part of the ribosomal stalk of the 50S ribosomal subunit. Interacts with L10 and the large rRNA to form the base of the stalk. L10 forms an elongated spine to which L12 dimers bind in a sequential fashion forming a multimeric L10(L12)X complex. In terms of processing, one or more lysine residues are methylated.

In terms of biological role, forms part of the ribosomal stalk which helps the ribosome interact with GTP-bound translation factors. This Anaeromyxobacter sp. (strain Fw109-5) protein is Large ribosomal subunit protein uL11.